Consider the following 229-residue polypeptide: Peptidyl-tRNA hydrolase (229 aa).

Tyr-17 is a binding site for tRNA. The active-site Proton acceptor is His-22. TRNA contacts are provided by Phe-74, Asn-76, and Asn-122. The segment at 194–229 (AGKTTRPRKPVRQTANAEASNNSPEASATPQNKDNT) is disordered. The span at 207–223 (TANAEASNNSPEASATP) shows a compositional bias: low complexity.

It belongs to the PTH family. In terms of assembly, monomer.

The protein resides in the cytoplasm. It carries out the reaction an N-acyl-L-alpha-aminoacyl-tRNA + H2O = an N-acyl-L-amino acid + a tRNA + H(+). Functionally, hydrolyzes ribosome-free peptidyl-tRNAs (with 1 or more amino acids incorporated), which drop off the ribosome during protein synthesis, or as a result of ribosome stalling. Catalyzes the release of premature peptidyl moieties from peptidyl-tRNA molecules trapped in stalled 50S ribosomal subunits, and thus maintains levels of free tRNAs and 50S ribosomes. This Desulfovibrio desulfuricans (strain ATCC 27774 / DSM 6949 / MB) protein is Peptidyl-tRNA hydrolase.